A 559-amino-acid chain; its full sequence is Formate--tetrahydrofolate ligase (559 aa).

68 to 75 serves as a coordination point for ATP; it reads TPAGEGKT.

It belongs to the formate--tetrahydrofolate ligase family.

The catalysed reaction is (6S)-5,6,7,8-tetrahydrofolate + formate + ATP = (6R)-10-formyltetrahydrofolate + ADP + phosphate. It functions in the pathway one-carbon metabolism; tetrahydrofolate interconversion. The polypeptide is Formate--tetrahydrofolate ligase (Moorella thermoacetica (strain ATCC 39073 / JCM 9320)).